Consider the following 304-residue polypeptide: Small ribosomal subunit biogenesis GTPase RsgA (304 aa).

Residues 78-237 (VSFLTRPPVA…VADTPGFNRP (160 aa)) enclose the CP-type G domain. GTP-binding positions include 127–130 (TKTD) and 179–187 (GPSGVGKSS). The Zn(2+) site is built by C262, C267, H269, and C275.

It belongs to the TRAFAC class YlqF/YawG GTPase family. RsgA subfamily. As to quaternary structure, monomer. Associates with 30S ribosomal subunit, binds 16S rRNA. Zn(2+) serves as cofactor.

Its subcellular location is the cytoplasm. Its function is as follows. One of several proteins that assist in the late maturation steps of the functional core of the 30S ribosomal subunit. Helps release RbfA from mature subunits. May play a role in the assembly of ribosomal proteins into the subunit. Circularly permuted GTPase that catalyzes slow GTP hydrolysis, GTPase activity is stimulated by the 30S ribosomal subunit. This Synechococcus sp. (strain CC9311) protein is Small ribosomal subunit biogenesis GTPase RsgA.